Consider the following 4462-residue polypeptide: MTMAPDVRLEYLEEVASIVLKFKPDKWSKLIGAEENVALFTEFFEKPDVQVLVLTLNAAGMIIPCLGFPQSLKSKGVYFIKTKSENINKDNYRARLLYGDISPTPVDQLIAVVEEVLSSLLNQSENMAGWPQVVSEDIVKQVHRLKNEMFVMSGKIKGKTLLPIPEHLGSLDGTLESMERIPSSLDNLLLHAIETTIIDWSHQIRDVLSKDSAQALLDGLHPLPQVEFEFWDTRLLNLKCIHEQLNRPKVNKIVEILEKAKSCYWPALQNVYTNVTEGLKEANDIVLYLKPLRILLEEMEQADFTMLPTFIAKVLDTICFIWATSEYYNTPARIIVILQEFCNQIIEMTRTFLSPEEVLKGLQGEIEEVLSGISLAVNVLKELYQTYDFCCVNMKLFFKDKEPVPWEFPSSLAFSRINSFFQRIQTIEELYKTAIEFLKLEKIELGGVRGNLLGSLVTRIYDEVFELVKVFADCKYDPLDPGDSNFDRDYADFEIKIQDLDRRLATIFCQGFDDCSCIKSSAKLLYMCGGLMERPLILAEVAPRYSVMLELFDAELDNAKILYDAQMAASEEGNIPLIHKNMPPVAGQLKWSLELQERLEVSMKHLKHVEHPVMSGAEAKLTYQKYDEMMELLRCHREKIYQQWVAGVDQDCHFNLGQPLILRDAASNLIHVNFSKALVAVLREVKYLNFQQQKEIPDSAESLFSENETFRKFVGNLELIVGWYNEIKTIVKAVEFLLIKSELEAIDVKLLSAETTLFWNGEGVFQYIQEVREILHNLQNRMQKAKQNIEGISQAMKDWSANPLFERKDNKKEALLDLDGRIANLNKRYAAVRDAGVKIQAMVAENAELFRADTLSLPWKDYVIYIDDMVLDEFDQFIRKSLSFLMDNMVIDESIAPLFEIRMELDEDGLTFNPTLEVGSDRGFLALIEGLVNDIYNVARLIPRLAKDRMNYKMDLEDNTDLIEMREEVSSLVINAMKEAEEYQDSFERYSYLWTDNLQEFMKNFLIYGCAVTAEDLDTWTDDTIPKTPPTLAQFQEQIDSYEKLYEEVSKCENTKVFHGWLQCDCRPFKQALLSTIRRWGFMFKRHLSNHVTNSLADLEAFMKVARMGLTKPLKEGDYDGLVEVMGHLMKVKERQAATDNMFEPLKQTIELLKTYGEEMPEEIHLKLQELPEHWANTKKLAIQVKLTVAPLQANEVSILRRKCQQFELKQHEFRERFRREAPFSFSDPNPYKSLNKQQKSISAMEGIMEALSKSGGLFEVPVPDYKQLKACHREVRLLKELWDMVVVVNTSIEDWKTTKWKDINVEQMDIDCKKFAKDMRSLDKEMKTWDAFVGLDNTVKNVITSLRAVSELQNPAIRERHWQQLMQATQVKFKMSEETTLADLLQLNLHSYEDEVRNIVDKAVKESGMEKVLKALDSTWSMMEFQHEPHPRTGTMMLKSSEVLVETLEDNQVQLQNLMMSKYLAHFLKEVTSWQQKLSTADSVISIWFEVQRTWSHLESIFIGSEDIRTQLPGDSQRFDDINQEFKALMEDAVKTPNVVEATSKPGLYNKLEALKKSLAICEKALAEYLETKRLAFPRFYFVSSADLLDILSNGNDPVEVSRHLSKLFDSLCKLKFRLDASDKPLKVGLGMYSKEDEYMVFDQECDLSGQVEVWLNRVLDRMCSTLRHEIPEAVVTYEEKPREQWILDYPAQVALTCTQIWWTTEVGLAFARLEEGYENAIRDYNKKQISQLNVLITLLMGNLNAGDRMKIMTICTIDVHARDVVAKMIVAKVESSQAFTWQAQLRHRWDEEKRHCFANICDAQIQYSYEYLGNTPRLVITPLTDRCYITLTQSLHLIMGGAPAGPAGTGKTETTKDLGRALGTMVYVFNCSEQMDYKSCGNIYKGLAQTGAWGCFDEFNRISVEVLSVIAVQVKCVQDAIRAKKKAFNFLGEIIGLIPTVGIFITMNPGYAGRAELPENLKALFRPCAMVVPDFELICEIMLMAEGFLEARLLARKFITLYTLCKELLSKQDHYDWGLRAIKSVLVVAGSLKRGDPSRAEDQVLMRALRDFNIPKIVTDDLPVFMGLIGDLFPALDVPRKRDLNFEKIIKQSIVELKLQAEDSFVLKVVQLEELLQVRHSVFIVGNAGSGKSQVLKSLNKTYQNLKRKPVAVDLDPKAVTCDELFGIINPVTREWKDGLFSTIMRDLANITHDGPKWIILDGDIDPMWIESLNTVMDDNKVLTLASNERIPLNRTMRLVFEISHLRTATPATVSRAGILYINPADLGWNPVVSSWIERRKVQSEKANLMILFDKYLPTCLDKLRFGFKKITPVPEITVIQTILYLLECLLTEKTVPPDSPRELYELYFVFTCFWAFGGAMFQDQLVDYRVEFSKWWINEFKTIKFPSQGTIFDYYIDPDTKKFLPWTDKVPSFELDPDVPLQASLVHTTETIRIRYFMDLLMEKSWPVMLVGNAGTGKSVLMGDKLESLNTDNYLVQAVPFNFYTTSAMLQGVLEKPLEKKSGRNYGPPGTKKLVYFIDDMNMPEVDKYGTVAPHTLIRQHMDHRHWYDRHKLTLKDIHNCQYVACMNPTSGSFTIDSRLQRHFCVFAVSFPGQEALTTIYNTILTQHLAFRSVSMAIQRISSQLVAAALALHQKITATFLPTAIKFHYVFNLRDLSNIFQGLLFSTAEVLKTPLDLVRLWLHETERVYGDKMVDEKDQETLHRVTMASTKKFFDDLGDELLFAKPNIFCHFAQGIGDPKYVPVTDMAPLNKLLVDVLDSYNEVNAVMNLVLFEDAVAHICRINRILESPRGNALLVGVGGSGKQSLSRLAAYISGLDVFQITLKKGYGIPDLKIDLAAQYIKAAVKNVPSVFLMTDSQVAEEQFLVLINDLLASGEIPGLFMEDEVENIISSMRPQVKSLGMNDTRETCWKFFIEKVRRQLKVILCFSPVGSVLRVRARKFPAVVNCTAIDWFHEWPEDALVSVSARFLEETEGIPWEVKASISFFMSYVHTTVNEMSRVYLATERRYNYTTPKTFLEQIKLYQNLLAKKRTELVAKIERLENGLMKLQSTASQVDDLKAKLAIQEAELKQKNESADQLIQVVGIEAEKVSKEKAIADQEEVKVEVINKNVTEKQKACETDLAKAEPALLAAQEALDTLNKNNLTELKSFGSPPDAVVNVTAAVMILTAPGGKIPKDKSWKAAKIMMGKVDTFLDSLKKFDKEHIPEACLKAFKPYQGNPTFDPEFIRSKSTAAAGLCSWCINIVRFYEVYCDVAPKRQALEEANAELAEAQEKLSRIKNKIAELNANLSNLTSAFEKATAEKIKCQQEADATNRVILLANRLVGGLASENIRWAESVENFRSQGVTLCGDVLLISAFVSYVGYFTKKYRNELMEKFWIPYIHNLKVPIPITNGLDPLSLLTDDADVATWNNQGLPSDRMSTENATILGNTERWPLIVDAQLQGIKWIKNKYRSELKAIRLGQKSYLDVIEQAISEGDTLLIENIGETVDPVLDPLLGRNTIKKGKYIKIGDKEVEYHPKFRLILHTKYFNPHYKPEMQAQCTLINFLVTRDGLEDQLLAAVVAKERPDLEQLKANLTKSQNEFKIVLKELEDSLLARLSAASGNFLGDTALVENLETTKHTASEIEEKVVEAKITEVKINEARENYRPAAERASLLYFILNDLNKINPVYQFSLKAFNVVFEKAIQRTTPANEVKQRVINLTDEITYSVYMYTARGLFERDKLIFLAQVTFQVLSMKKELNPVELDFLLRFPFKAGVVSPVDFLQHQGWGGIKALSEMDEFKNLDSDIEGSAKRWKKLVESEAPEKEIFPKEWKNKTALQKLCMVRCLRPDRMTYAIKNFVEEKMGSKFVEGRSVEFSKSYEESSPSTSIFFILSPGVDPLKDVEALGKKLGFTIDNGKLHNVSLGQGQEVVAENALDVAAEKGHWVILQNIHLVARWLGTLDKKLEHYSTGSHEDYRVFISAEPAPSPETHIIPQGILENAIKITNEPPTGMHANLHKALDLFTQDTLEMCTKEMEFKCMLFALCYFHAVVAERRKFGAQGWNRSYPFNNGDLTISINVLYNYLEANPKVPWDDLRYLFGEIMYGGHITDDWDRRLCRTYLAEYIRTEMLEGDVLLAPGFQIPPNLDYKGYHEYIDENLPPESPYLYGLHPNAEIGFLTVTSEKLFRTVLEMQPKETDSGAGTGVSREEKVKAVLDDILEKIPETFNMAEIMAKAAEKTPYVVVAFQECERMNILTNEMRRSLKELNLGLKGELTITTDVEDLSTALFYDTVPDTWVARAYPSMMGLAAWYADLLLRIRELEAWTTDFALPTTVWLAGFFNPQSFLTAIMQSMARKNEWPLDKMCLSVEVTKKNREDMTAPPREGSYVYGLFMEGARWDTQTGVIAEARLKELTPAMPVIFIKAIPVDRMETKNIYECPVYKTRIRGPTYVWTFNLKTKEKAAKWILAAVALLLQV.

The interval 1-1808 is stem; sequence MTMAPDVRLE…FANICDAQIQ (1808 aa). TPR repeat units lie at residues 1019–1052 and 1702–1736; these read TWTD…VSKC and IWWT…QLNV. AAA regions lie at residues 1809–2030, 2090–2311, 2417–2665, and 2763–3012; these read YSYE…VLVV, KIIK…FGFK, ELDP…IFQG, and SYNE…ERRY. ATP-binding positions include 1847 to 1854, 2128 to 2135, 2455 to 2462, and 2801 to 2808; these read GPAGTGKT, GNAGSGKS, GNAGTGKS, and GVGGSGKQ. Coiled coils occupy residues 3027–3086 and 3257–3309; these read YQNL…LIQV and DVAP…EKIK. Residues 3027–3313 form a stalk region; the sequence is YQNLLAKKRT…TAEKIKCQQE (287 aa). AAA stretches follow at residues 3405 to 3632 and 3842 to 4068; these read LTDD…EIEE and IKNF…VLYN. Residues 4147-4182 form a TPR 3 repeat; it reads PESPYLYGLHPNAEIGFLTVTSEKLFRTVLEMQPKE.

The protein belongs to the dynein heavy chain family. In terms of assembly, consists of at least two heavy chains and a number of intermediate and light chains. In terms of tissue distribution, expressed in testis. Expressed in spermatozoa (at protein level). Not detected in airway epithelial cells (at protein level).

The protein localises to the cytoplasm. It is found in the cytoskeleton. Its subcellular location is the flagellum axoneme. Its function is as follows. Force generating protein component of the outer dynein arms (ODAs) in the sperm flagellum. Produces force towards the minus ends of microtubules. Dynein has ATPase activity; the force-producing power stroke is thought to occur on release of ADP. Plays a major role in sperm motility, implicated in sperm flagellar assembly and beating. The chain is Dynein axonemal heavy chain 17 from Homo sapiens (Human).